The following is a 473-amino-acid chain: Glutamate--tRNA ligase (473 aa).

A 'HIGH' region motif is present at residues 11 to 21 (PSPTGFLHIGG). The 'KMSKS' region signature appears at 240 to 244 (KLSKR). Lysine 243 serves as a coordination point for ATP.

This sequence belongs to the class-I aminoacyl-tRNA synthetase family. Glutamate--tRNA ligase type 1 subfamily. As to quaternary structure, monomer.

The protein localises to the cytoplasm. The catalysed reaction is tRNA(Glu) + L-glutamate + ATP = L-glutamyl-tRNA(Glu) + AMP + diphosphate. Functionally, catalyzes the attachment of glutamate to tRNA(Glu) in a two-step reaction: glutamate is first activated by ATP to form Glu-AMP and then transferred to the acceptor end of tRNA(Glu). This Rhodopseudomonas palustris (strain HaA2) protein is Glutamate--tRNA ligase.